The chain runs to 154 residues: Transcriptional repressor NrdR (154 aa).

A zinc finger lies at cysteine 3 to cysteine 34. In terms of domain architecture, ATP-cone spans proline 49–glutamate 139.

Belongs to the NrdR family. The cofactor is Zn(2+).

Negatively regulates transcription of bacterial ribonucleotide reductase nrd genes and operons by binding to NrdR-boxes. The polypeptide is Transcriptional repressor NrdR (Pseudomonas syringae pv. syringae (strain B728a)).